The following is a 79-amino-acid chain: Small ribosomal subunit protein bS18 (79 aa).

This sequence belongs to the bacterial ribosomal protein bS18 family. Part of the 30S ribosomal subunit. Forms a tight heterodimer with protein bS6.

Functionally, binds as a heterodimer with protein bS6 to the central domain of the 16S rRNA, where it helps stabilize the platform of the 30S subunit. In Latilactobacillus sakei subsp. sakei (strain 23K) (Lactobacillus sakei subsp. sakei), this protein is Small ribosomal subunit protein bS18.